The chain runs to 194 residues: Interleukin-18 (194 aa).

The propeptide occupies 1–36 (MAAMSEEGSCVNFKEMMFIDNTLYLIPEDNGDLESD).

The protein belongs to the IL-1 family. Forms a ternary complex with ligand-binding receptor subunit IL18R1 and signaling receptor subunit IL18RAP at the plasma membrane. Mature IL18 first binds to IL18R1 forming a low affinity binary complex, which then interacts with IL18RAP to form a high affinity ternary complex that signals inside the cell. Interacts with cargo receptor TMED10; the interaction mediates the translocation from the cytoplasm into the ERGIC (endoplasmic reticulum-Golgi intermediate compartment) and thereby secretion. Post-translationally, the pro-IL-18 precursor is processed by CASP1 to yield its mature, active form. The pro-IL-18 precursor is however not processed by Casp4/Casp11 in rodents. The pro-IL-18 precursor features autoinhibitory interactions between the propeptide and the post-cleavage-site region, preventing recognition by the IL18R1 receptor. Processing by CASP1 induces conformational changes to generate critical receptor-binding sites. The mature form is then secreted and released in the extracellular milieu by passing through the gasdermin-D (GSDMD) pore. In contrast, cleavage by CASP3 inactivates IL18.

The protein localises to the cytoplasm. It localises to the cytosol. It is found in the secreted. In terms of biological role, pro-inflammatory cytokine primarily involved in epithelial barrier repair, polarized T-helper 1 (Th1) cell and natural killer (NK) cell immune responses. Upon binding to IL18R1 and IL18RAP, forms a signaling ternary complex which activates NF-kappa-B, triggering synthesis of inflammatory mediators. Synergizes with IL12/interleukin-12 to induce IFNG synthesis from T-helper 1 (Th1) cells and natural killer (NK) cells. Involved in transduction of inflammation downstream of pyroptosis: its mature form is specifically released in the extracellular milieu by passing through the gasdermin-D (GSDMD) pore. In Rattus norvegicus (Rat), this protein is Interleukin-18 (Il18).